The chain runs to 314 residues: Lipoyl synthase (314 aa).

Residues C60, C65, C71, C86, C90, C93, and S300 each contribute to the [4Fe-4S] cluster site. The region spanning 72–289 (FRKGTATFMI…RQFGLSIGFS (218 aa)) is the Radical SAM core domain.

Belongs to the radical SAM superfamily. Lipoyl synthase family. It depends on [4Fe-4S] cluster as a cofactor.

It is found in the cytoplasm. The catalysed reaction is [[Fe-S] cluster scaffold protein carrying a second [4Fe-4S](2+) cluster] + N(6)-octanoyl-L-lysyl-[protein] + 2 oxidized [2Fe-2S]-[ferredoxin] + 2 S-adenosyl-L-methionine + 4 H(+) = [[Fe-S] cluster scaffold protein] + N(6)-[(R)-dihydrolipoyl]-L-lysyl-[protein] + 4 Fe(3+) + 2 hydrogen sulfide + 2 5'-deoxyadenosine + 2 L-methionine + 2 reduced [2Fe-2S]-[ferredoxin]. It participates in protein modification; protein lipoylation via endogenous pathway; protein N(6)-(lipoyl)lysine from octanoyl-[acyl-carrier-protein]: step 2/2. In terms of biological role, catalyzes the radical-mediated insertion of two sulfur atoms into the C-6 and C-8 positions of the octanoyl moiety bound to the lipoyl domains of lipoate-dependent enzymes, thereby converting the octanoylated domains into lipoylated derivatives. The sequence is that of Lipoyl synthase from Pelobacter propionicus (strain DSM 2379 / NBRC 103807 / OttBd1).